Reading from the N-terminus, the 36-residue chain is Photosystem II reaction center protein M (36 aa).

Residues Ile5–Leu25 form a helical membrane-spanning segment.

Belongs to the PsbM family. As to quaternary structure, PSII is composed of 1 copy each of membrane proteins PsbA, PsbB, PsbC, PsbD, PsbE, PsbF, PsbH, PsbI, PsbJ, PsbK, PsbL, PsbM, PsbT, PsbY, PsbZ, Psb30/Ycf12, at least 3 peripheral proteins of the oxygen-evolving complex and a large number of cofactors. It forms dimeric complexes.

Its subcellular location is the plastid. The protein localises to the chloroplast thylakoid membrane. Its function is as follows. One of the components of the core complex of photosystem II (PSII). PSII is a light-driven water:plastoquinone oxidoreductase that uses light energy to abstract electrons from H(2)O, generating O(2) and a proton gradient subsequently used for ATP formation. It consists of a core antenna complex that captures photons, and an electron transfer chain that converts photonic excitation into a charge separation. This subunit is found at the monomer-monomer interface. The chain is Photosystem II reaction center protein M from Bigelowiella natans (Pedinomonas minutissima).